A 310-amino-acid chain; its full sequence is 4-hydroxyproline 2-epimerase (310 aa).

Cys88 functions as the Proton acceptor in the catalytic mechanism. Substrate contacts are provided by residues Gly89–His90, His208, and Asp232. Cys236 (proton donor) is an active-site residue. A substrate-binding site is contributed by Gly237–Thr238.

Belongs to the proline racemase family.

The catalysed reaction is trans-4-hydroxy-L-proline = cis-4-hydroxy-D-proline. Functionally, catalyzes the epimerization of trans-4-hydroxy-L-proline (t4LHyp) to cis-4-hydroxy-D-proline (c4DHyp). Is likely involved in a degradation pathway that converts t4LHyp to alpha-ketoglutarate. Displays no proline racemase activity. The chain is 4-hydroxyproline 2-epimerase from Acinetobacter baumannii (strain AYE).